Consider the following 288-residue polypeptide: 33 kDa chaperonin (288 aa).

2 disulfide bridges follow: Cys236–Cys238 and Cys269–Cys272.

This sequence belongs to the HSP33 family. Under oxidizing conditions two disulfide bonds are formed involving the reactive cysteines. Under reducing conditions zinc is bound to the reactive cysteines and the protein is inactive.

It localises to the cytoplasm. Redox regulated molecular chaperone. Protects both thermally unfolding and oxidatively damaged proteins from irreversible aggregation. Plays an important role in the bacterial defense system toward oxidative stress. In Lactococcus lactis subsp. cremoris (strain MG1363), this protein is 33 kDa chaperonin.